A 213-amino-acid chain; its full sequence is Probable transaldolase (213 aa).

Lys-83 acts as the Schiff-base intermediate with substrate in catalysis.

This sequence belongs to the transaldolase family. Type 3B subfamily.

Its subcellular location is the cytoplasm. It carries out the reaction D-sedoheptulose 7-phosphate + D-glyceraldehyde 3-phosphate = D-erythrose 4-phosphate + beta-D-fructose 6-phosphate. Its pathway is carbohydrate degradation; pentose phosphate pathway; D-glyceraldehyde 3-phosphate and beta-D-fructose 6-phosphate from D-ribose 5-phosphate and D-xylulose 5-phosphate (non-oxidative stage): step 2/3. Transaldolase is important for the balance of metabolites in the pentose-phosphate pathway. This Geobacillus sp. (strain WCH70) protein is Probable transaldolase.